The sequence spans 495 residues: Serine/threonine-protein kinase F (495 aa).

The region spanning Y46–L314 is the Protein kinase domain. ATP is bound by residues L52–A60 and K77. D187 serves as the catalytic Proton acceptor. The tract at residues G316–P354 is disordered. The span at T329–P350 shows a compositional bias: polar residues.

The protein belongs to the protein kinase superfamily. Ser/Thr protein kinase family.

The catalysed reaction is L-seryl-[protein] + ATP = O-phospho-L-seryl-[protein] + ADP + H(+). The enzyme catalyses L-threonyl-[protein] + ATP = O-phospho-L-threonyl-[protein] + ADP + H(+). In Synechocystis sp. (strain ATCC 27184 / PCC 6803 / Kazusa), this protein is Serine/threonine-protein kinase F (spkF).